Reading from the N-terminus, the 368-residue chain is F-box only protein 28 (368 aa).

Residues 1–11 (MAAAAEERMAE) show a composition bias toward basic and acidic residues. The interval 1 to 56 (MAAAAEERMAEEGGGGQGDGGSSLASGSTQRQPPPPAPQHPQPGSQALPAPALAPD) is disordered. Over residues 12-21 (EGGGGQGDGG) the composition is skewed to gly residues. The segment covering 22 to 31 (SSLASGSTQR) has biased composition (low complexity). Over residues 32-41 (QPPPPAPQHP) the composition is skewed to pro residues. Residues 42–56 (QPGSQALPAPALAPD) are compositionally biased toward low complexity. Residues 61–109 (NNTLVALPIVAIENILSFMSYDEISQLRLVCKRMDLVCQRMLNQGFLKV) form the F-box domain. Phosphoserine occurs at positions 235 and 242. At T270 the chain carries Phosphothreonine. The interval 328–368 (MESAVGNSSGSGQNEESPRKRKKATEAIDSLRKSKRLRNRK) is disordered. A compositionally biased stretch (low complexity) spans 333–342 (GNSSGSGQNE). S344 is subject to Phosphoserine.

Part of a SCF (SKP1-cullin-F-box) protein ligase complex.

The protein resides in the chromosome. Its subcellular location is the centromere. The protein localises to the kinetochore. Its function is as follows. Probably recognizes and binds to some phosphorylated proteins and promotes their ubiquitination and degradation. The protein is F-box only protein 28 (FBXO28) of Homo sapiens (Human).